A 418-amino-acid polypeptide reads, in one-letter code: Glutamyl-tRNA reductase (418 aa).

Substrate-binding positions include T49–R52, S109, E114–Q116, and Q120. The Nucleophile role is filled by C50. Residue G189–I194 coordinates NADP(+).

Belongs to the glutamyl-tRNA reductase family. As to quaternary structure, homodimer.

It carries out the reaction (S)-4-amino-5-oxopentanoate + tRNA(Glu) + NADP(+) = L-glutamyl-tRNA(Glu) + NADPH + H(+). Its pathway is porphyrin-containing compound metabolism; protoporphyrin-IX biosynthesis; 5-aminolevulinate from L-glutamyl-tRNA(Glu): step 1/2. Its function is as follows. Catalyzes the NADPH-dependent reduction of glutamyl-tRNA(Glu) to glutamate 1-semialdehyde (GSA). In Escherichia coli O139:H28 (strain E24377A / ETEC), this protein is Glutamyl-tRNA reductase.